A 169-amino-acid polypeptide reads, in one-letter code: Ferric-chelate reductase (NAD(P)H) (169 aa).

Residue Tyr7 coordinates NADP(+). Residues 27–31, 45–52, 82–84, and Lys89 each bind FMN; these read QIANT, CLNKENDT, and RKS. NADP(+) is bound by residues His126 and 147-154; that span reads YADYHLMK.

The protein belongs to the non-flavoprotein flavin reductase family. In terms of assembly, homodimer. FMN serves as cofactor. Requires FAD as cofactor.

It catalyses the reaction 2 a Fe(II)-siderophore + NAD(+) + H(+) = 2 a Fe(III)-siderophore + NADH. The catalysed reaction is 2 a Fe(II)-siderophore + NADP(+) + H(+) = 2 a Fe(III)-siderophore + NADPH. In terms of biological role, catalyzes the reduction of bound ferric iron (Fe(3+)) in a variety of iron chelators (siderophores) using NAD(P)H as the electron donor, resulting in the release of Fe(2+). Not active with uncomplexed Fe(3+). Also reduces FMN and FAD, but not riboflavin. The polypeptide is Ferric-chelate reductase (NAD(P)H) (Archaeoglobus fulgidus (strain ATCC 49558 / DSM 4304 / JCM 9628 / NBRC 100126 / VC-16)).